We begin with the raw amino-acid sequence, 590 residues long: UvrABC system protein C (590 aa).

Residues 14-91 form the GIY-YIG domain; sequence DQPGCYLMKD…IKKYDPKYNV (78 aa). The UVR domain maps to 196 to 231; sequence QQIKKELTEKMQEAAEQLEFERAKELRDQIAYIDST.

Belongs to the UvrC family. As to quaternary structure, interacts with UvrB in an incision complex.

The protein resides in the cytoplasm. In terms of biological role, the UvrABC repair system catalyzes the recognition and processing of DNA lesions. UvrC both incises the 5' and 3' sides of the lesion. The N-terminal half is responsible for the 3' incision and the C-terminal half is responsible for the 5' incision. This chain is UvrABC system protein C, found in Bacillus pumilus (strain SAFR-032).